The following is a 266-amino-acid chain: Undecaprenyl-diphosphatase 3 (266 aa).

8 helical membrane passes run 4 to 24 (IEAFKALFLGFIEGLTEFLPI), 43 to 63 (SGRAFEVVIQLGAILAVCWLY), 86 to 106 (FSVLMAFFPAVIIGVLAVDFI), 109 to 129 (VLFSPLVVAIALIIGGLIIFW), 145 to 165 (ITFKQAIAVGFIQCLAMIPGT), 186 to 206 (TEFSFFLAMPTMLGAATYDLL), 219 to 239 (NIGLGFITAFISALFVVKALV), and 246 to 266 (TLRVFAWYRIVLGIIIMFVML).

This sequence belongs to the UppP family.

Its subcellular location is the cell inner membrane. It carries out the reaction di-trans,octa-cis-undecaprenyl diphosphate + H2O = di-trans,octa-cis-undecaprenyl phosphate + phosphate + H(+). Functionally, catalyzes the dephosphorylation of undecaprenyl diphosphate (UPP). Confers resistance to bacitracin. This Acinetobacter baylyi (strain ATCC 33305 / BD413 / ADP1) protein is Undecaprenyl-diphosphatase 3.